The chain runs to 144 residues: Putative acetyltransferase SAOUHSC_00995 (144 aa).

The region spanning 1-141 (MFSKVNNQKM…EHIEMTKKLT (141 aa)) is the N-acetyltransferase domain. Residues 71 to 73 (VAV), G79, and 112 to 114 (PFY) each bind CoA.

It belongs to the UPF0039 (ElaA) family.

Could catalyze the transfer of an acetyl group from acetyl coenzyme A (AcCoA) to an acceptor substrate and release both CoA and the acetylated product. This chain is Putative acetyltransferase SAOUHSC_00995, found in Staphylococcus aureus (strain NCTC 8325 / PS 47).